The primary structure comprises 348 residues: Dihydroorotase (348 aa).

Histidine 14 and histidine 16 together coordinate Zn(2+). Substrate is bound by residues 16 to 18 and asparagine 42; that span reads HLR. Zn(2+)-binding residues include lysine 100, histidine 137, and histidine 175. The residue at position 100 (lysine 100) is an N6-carboxylysine. Residue histidine 137 participates in substrate binding. Residue leucine 220 participates in substrate binding. Zn(2+) is bound at residue aspartate 248. Aspartate 248 is an active-site residue. Residues histidine 252 and alanine 264 each contribute to the substrate site.

The protein belongs to the metallo-dependent hydrolases superfamily. DHOase family. Class II DHOase subfamily. In terms of assembly, homodimer. Requires Zn(2+) as cofactor.

It carries out the reaction (S)-dihydroorotate + H2O = N-carbamoyl-L-aspartate + H(+). The protein operates within pyrimidine metabolism; UMP biosynthesis via de novo pathway; (S)-dihydroorotate from bicarbonate: step 3/3. Functionally, catalyzes the reversible cyclization of carbamoyl aspartate to dihydroorotate. The protein is Dihydroorotase of Ectopseudomonas mendocina (strain ymp) (Pseudomonas mendocina).